The chain runs to 237 residues: UDP-2,3-diacylglucosamine hydrolase (237 aa).

Positions 9, 11, 42, 80, and 115 each coordinate Mn(2+). Residue 80–81 (NR) participates in substrate binding. Substrate is bound by residues Asp123, Ser161, Lys165, Lys168, and His196. His196 and His198 together coordinate Mn(2+).

Belongs to the LpxH family. Requires Mn(2+) as cofactor.

It localises to the cell inner membrane. The protein resides in the cytoplasm. The catalysed reaction is UDP-2-N,3-O-bis[(3R)-3-hydroxytetradecanoyl]-alpha-D-glucosamine + H2O = 2-N,3-O-bis[(3R)-3-hydroxytetradecanoyl]-alpha-D-glucosaminyl 1-phosphate + UMP + 2 H(+). It functions in the pathway glycolipid biosynthesis; lipid IV(A) biosynthesis; lipid IV(A) from (3R)-3-hydroxytetradecanoyl-[acyl-carrier-protein] and UDP-N-acetyl-alpha-D-glucosamine: step 4/6. Hydrolyzes the pyrophosphate bond of UDP-2,3-diacylglucosamine to yield 2,3-diacylglucosamine 1-phosphate (lipid X) and UMP by catalyzing the attack of water at the alpha-P atom. Involved in the biosynthesis of lipid A, a phosphorylated glycolipid that anchors the lipopolysaccharide to the outer membrane of the cell. The sequence is that of UDP-2,3-diacylglucosamine hydrolase from Haemophilus influenzae (strain ATCC 51907 / DSM 11121 / KW20 / Rd).